Reading from the N-terminus, the 373-residue chain is Probable pectin lyase C (373 aa).

A signal peptide spans 1–18 (MKVPFLQLLCLNAALASA). 2 cysteine pairs are disulfide-bonded: cysteine 81-cysteine 100 and cysteine 90-cysteine 220. Asparagine 123 is a glycosylation site (N-linked (GlcNAc...) asparagine). The active site involves arginine 250. A disulfide bridge connects residues cysteine 316 and cysteine 324.

Belongs to the polysaccharide lyase 1 family.

It localises to the secreted. The catalysed reaction is Eliminative cleavage of (1-&gt;4)-alpha-D-galacturonan methyl ester to give oligosaccharides with 4-deoxy-6-O-methyl-alpha-D-galact-4-enuronosyl groups at their non-reducing ends.. Functionally, pectinolytic enzymes consist of four classes of enzymes: pectin lyase, polygalacturonase, pectin methylesterase and rhamnogalacturonase. Among pectinolytic enzymes, pectin lyase is the most important in depolymerization of pectin, since it cleaves internal glycosidic bonds of highly methylated pectins. In Aspergillus niger (strain ATCC MYA-4892 / CBS 513.88 / FGSC A1513), this protein is Probable pectin lyase C (pelC).